The primary structure comprises 62 residues: MKIHIFLFVLFFFLVPIATRGVKCAVKDTYSCFIVRGKCRHECHDFEKPIGFCTKLNANCYM.

An N-terminal signal peptide occupies residues 1–21; sequence MKIHIFLFVLFFFLVPIATRG. 2 disulfide bridges follow: cysteine 32–cysteine 60 and cysteine 39–cysteine 53.

The protein belongs to the beta-defensin family.

It localises to the secreted. Functionally, has antibacterial activity. This chain is Beta-defensin 133 (DEFB133), found in Pan troglodytes (Chimpanzee).